The following is a 318-amino-acid chain: V-set and immunoglobulin domain-containing protein 1 (318 aa).

Positions M1 to C19 are cleaved as a signal peptide. One can recognise an Ig-like V-type domain in the interval V20 to T131. Topologically, residues V20–A233 are extracellular. Disulfide bonds link C41–C114 and C157–C207. One can recognise an Ig-like C2-type domain in the interval P136–H223. The helical transmembrane segment at A234–V254 threads the bilayer. Topologically, residues K255–A318 are cytoplasmic. The segment at Q261–A318 is disordered.

Expressed in thymocytes.

Its subcellular location is the membrane. The chain is V-set and immunoglobulin domain-containing protein 1 (vsig1) from Xenopus laevis (African clawed frog).